The sequence spans 861 residues: E3 ubiquitin-protein ligase SH3RF1 (861 aa).

The RING-type zinc-finger motif lies at 12 to 53 (CPVCLERLDASAKVLPCQHTFCKRCLLGIVSSRNELRCPECR). SH3 domains lie at 132 to 191 (PQLP…IIKP) and 194 to 257 (QPPP…FNSA). A disordered region spans residues 268–319 (SGVDTGEGSSGTTHSSNSQKQADAKKNTKKRHSFTSLTMSNKSSQSVQNRHS). Residues 273-285 (GEGSSGTTHSSNS) are compositionally biased toward low complexity. Positions 301–317 (FTSLTMSNKSSQSVQNR) are enriched in polar residues. In terms of domain architecture, SH3 3 spans 435 to 496 (TRPSVFVAIY…PGNYVAPVTR (62 aa)). Residues 684-731 (NSAANKQDKDSKKEKKGLLKLLSGASTKRKPRSSPPHSPTQELEQTNS) are disordered. Residues 689–700 (KQDKDSKKEKKG) show a composition bias toward basic and acidic residues. Residues 802 to 861 (RPCERYRVVVSYPPQSEAELELKEGDIVFVHKKREDGWFKGTLQRNGKTGLFPGSFVENI) form the SH3 4 domain.

It belongs to the SH3RF family. In terms of processing, autoubiquitinated. Ubiquitinated by SH3RF2, leading to proteasome-mediated degradation.

It is found in the cytoplasm. The protein resides in the perinuclear region. Its subcellular location is the cell projection. It localises to the lamellipodium. The protein localises to the golgi apparatus. It is found in the trans-Golgi network. The enzyme catalyses S-ubiquitinyl-[E2 ubiquitin-conjugating enzyme]-L-cysteine + [acceptor protein]-L-lysine = [E2 ubiquitin-conjugating enzyme]-L-cysteine + N(6)-ubiquitinyl-[acceptor protein]-L-lysine.. It participates in protein modification; protein ubiquitination. Functionally, has E3 ubiquitin-protein ligase activity. In the absence of an external substrate, it can catalyze self-ubiquitination. Acts as a scaffold protein that contributes to the effective activation of the JNK signaling pathway. The polypeptide is E3 ubiquitin-protein ligase SH3RF1 (sh3rf1) (Xenopus tropicalis (Western clawed frog)).